The sequence spans 124 residues: Large ribosomal subunit protein bL12 (124 aa).

The protein belongs to the bacterial ribosomal protein bL12 family. In terms of assembly, homodimer. Part of the ribosomal stalk of the 50S ribosomal subunit. Forms a multimeric L10(L12)X complex, where L10 forms an elongated spine to which 2 to 4 L12 dimers bind in a sequential fashion. Binds GTP-bound translation factors.

Functionally, forms part of the ribosomal stalk which helps the ribosome interact with GTP-bound translation factors. Is thus essential for accurate translation. The chain is Large ribosomal subunit protein bL12 from Phytoplasma australiense.